The sequence spans 424 residues: MKIYMVGGAVRDKLLGLPVTDHDWVVVGATPEALTAQGFLPVGKDFPVFLHPQTREEYALARTERNSARGYRGFEVYAAPEVTLEQDLARRDLTINSIAAPAHPDSAKGLFEPDFDALVDPYGGQRDLQAKVLRHVTDAFREDPVRILRLARFAARFADFSIAPETLAMMWEMVTDGEVDGLVPERVWQELARGLMEDKPSRMFDALRACGALQHLLPEVERLWGVAQSAQYHPEIDTGIHLMMVLDMAAQLGAPLPVRFACLCHDLGKGTTPADVLPRHIGHEERSAKLLKDVCQRLRVPSECREIADVVAREHGNIHRSGEFSPAAVVRLLERCDAFRKPRRFADILLACECDARGRLGFEQTPYPQRPRLLQLLAAAQSVATDKVAAEAMAAGQSGPKIGEWIHQARVEAVRQSAAAAPAP.

Gly8 and Arg11 together coordinate ATP. The CTP site is built by Gly8 and Arg11. Asp21 and Asp23 together coordinate Mg(2+). Residues Arg91, Arg149, and Arg152 each contribute to the ATP site. Arg91, Arg149, and Arg152 together coordinate CTP. Residues 238-339 (TGIHLMMVLD…VRLLERCDAF (102 aa)) enclose the HD domain.

This sequence belongs to the tRNA nucleotidyltransferase/poly(A) polymerase family. Bacterial CCA-adding enzyme type 1 subfamily. In terms of assembly, monomer. Can also form homodimers and oligomers. Mg(2+) is required as a cofactor. Requires Ni(2+) as cofactor.

It carries out the reaction a tRNA precursor + 2 CTP + ATP = a tRNA with a 3' CCA end + 3 diphosphate. It catalyses the reaction a tRNA with a 3' CCA end + 2 CTP + ATP = a tRNA with a 3' CCACCA end + 3 diphosphate. In terms of biological role, catalyzes the addition and repair of the essential 3'-terminal CCA sequence in tRNAs without using a nucleic acid template. Adds these three nucleotides in the order of C, C, and A to the tRNA nucleotide-73, using CTP and ATP as substrates and producing inorganic pyrophosphate. tRNA 3'-terminal CCA addition is required both for tRNA processing and repair. Also involved in tRNA surveillance by mediating tandem CCA addition to generate a CCACCA at the 3' terminus of unstable tRNAs. While stable tRNAs receive only 3'-terminal CCA, unstable tRNAs are marked with CCACCA and rapidly degraded. In Polaromonas naphthalenivorans (strain CJ2), this protein is Multifunctional CCA protein.